A 364-amino-acid chain; its full sequence is Envelope glycoprotein US27 (364 aa).

Over 1–36 the chain is Virion surface; that stretch reads MTTSTTTTTNIMLQVSNVTNHTLNSTEIYQLFEYTR. N-linked (GlcNAc...) asparagine; by host glycans are attached at residues asparagine 17, asparagine 20, and asparagine 24. Residues 37–57 traverse the membrane as a helical segment; it reads FGVWLMCIVGTFLNMLVITTI. Residues 58 to 69 lie on the Intravirion side of the membrane; the sequence is LYYRRKKKSPSD. The chain crosses the membrane as a helical span at residues 70 to 90; sequence TYICNLAVADLLIVVGLPFFL. The Virion surface segment spans residues 91–103; sequence EYAKHHPKLSREV. A helical membrane pass occupies residues 104–124; that stretch reads VCSGLNACFYICLFAGVCFLI. Over 125–150 the chain is Intravirion; the sequence is NLSMDRYCVIVWGVELNRVRNNKRAT. Residues 151–171 traverse the membrane as a helical segment; that stretch reads CWVVIFWILAALMGMPHYLMY. The Virion surface segment spans residues 172 to 188; that stretch reads SHTNNECVGEFANETSG. A helical membrane pass occupies residues 189–209; that stretch reads WFPVFLNTKVNICGYLAPIVL. Topologically, residues 210-234 are intravirion; it reads MAYTYNRMVRFIINYVGKWHMQTLH. A helical membrane pass occupies residues 235–255; it reads VLLVVVVSFASFWFPFNLALF. Residues 256 to 279 are Virion surface-facing; it reads LESIRLLSGTQNETLQTVITFCLY. A helical transmembrane segment spans residues 280-300; the sequence is VGQFLAYVRACLNPGIYILVG. Over 301 to 364 the chain is Intravirion; sequence TQMRKDMWTT…MESGEEEFLL (64 aa). The disordered stretch occupies residues 344 to 364; sequence KRTHYDRKHAPMESGEEEFLL.

It belongs to the G-protein coupled receptor 1 family. As to quaternary structure, heterodimerizes with US28.

The protein localises to the virion. Its subcellular location is the host cell membrane. In terms of biological role, plays an important role in spread of HCMV via the extracellular route. As a G-protein-coupled receptor (vGPCR), may activate signaling pathways important for virion assembly or egress processes. This is Envelope glycoprotein US27 (US27) from Homo sapiens (Human).